The sequence spans 308 residues: D-alanine--D-alanine ligase (308 aa).

The ATP-grasp domain maps to 104-304 (KQALVPHGIP…YAELVERIVE (201 aa)). 131–187 (LPRPYVLKPVNEGSSVGVAIVRDDSNYGNPISRDALGPWQQFDRLLAEPFIKGRELT) is a binding site for ATP. Mg(2+) is bound by residues aspartate 255, glutamate 271, and asparagine 273.

This sequence belongs to the D-alanine--D-alanine ligase family. Requires Mg(2+) as cofactor. Mn(2+) serves as cofactor.

The protein localises to the cytoplasm. The enzyme catalyses 2 D-alanine + ATP = D-alanyl-D-alanine + ADP + phosphate + H(+). It participates in cell wall biogenesis; peptidoglycan biosynthesis. Its function is as follows. Cell wall formation. The protein is D-alanine--D-alanine ligase of Sphingopyxis alaskensis (strain DSM 13593 / LMG 18877 / RB2256) (Sphingomonas alaskensis).